Reading from the N-terminus, the 266-residue chain is Protein YABBY 5 (266 aa).

A disordered region spans residues 1–22; sequence MMSSAPETFSLDHLSQHQQQQP. Residues 36–63 form a C4-type zinc finger; that stretch reads CNFCDTILAVGVPCSSLFKTVTVRCGHC. Residues 119–141 show a composition bias toward low complexity; it reads ASPNVSSITSSNSSCANNAPATS. The interval 119–174 is disordered; the sequence is ASPNVSSITSSNSSCANNAPATSMASAANKATQREPQQPKNAPSANRTSEKRQRVP. Residues 142–165 are compositionally biased toward polar residues; that stretch reads MASAANKATQREPQQPKNAPSANR.

It belongs to the YABBY family.

Its subcellular location is the nucleus. Functionally, may be involved in leaf cell growth and differentiation, rather than abaxial cell fate determination. The sequence is that of Protein YABBY 5 (YAB5) from Oryza sativa subsp. indica (Rice).